The following is a 459-amino-acid chain: Elongation factor 1-alpha (459 aa).

Glycine 2 carries the post-translational modification N,N,N-trimethylglycine. Residue lysine 3 is modified to N6,N6-dimethyllysine; alternate. N6-methyllysine; alternate is present on lysine 3. In terms of domain architecture, tr-type G spans 5 to 240 (KTHVNVVVIG…DAVDPPTRPS (236 aa)). The segment at 14–21 (GHVDSGKS) is G1. 14–21 (GHVDSGKS) provides a ligand contact to GTP. N6-methyllysine is present on lysine 30. Positions 70–74 (VITID) are G2. Lysine 79 carries the N6,N6,N6-trimethyllysine modification. Residues 91 to 94 (DAPG) form a G3 region. Residues 91–95 (DAPGH) and 153–156 (NKMD) contribute to the GTP site. The segment at 153-156 (NKMD) is G4. Residues 192-194 (SGW) form a G5 region. At lysine 316 the chain carries N6,N6-dimethyllysine; alternate. Lysine 316 is modified (N6-methyllysine; alternate). Lysine 390 is subject to N6-methyllysine.

This sequence belongs to the TRAFAC class translation factor GTPase superfamily. Classic translation factor GTPase family. EF-Tu/EF-1A subfamily.

The protein localises to the cytoplasm. In terms of biological role, this protein promotes the GTP-dependent binding of aminoacyl-tRNA to the A-site of ribosomes during protein biosynthesis. The sequence is that of Elongation factor 1-alpha (TEF) from Blastobotrys adeninivorans (Yeast).